The sequence spans 605 residues: UPF0313 protein GSU2873 (605 aa).

Residues 291–561 (AYEQIRASVT…LQKALLLWHL (271 aa)) form the Radical SAM core domain. Positions 305, 309, and 312 each coordinate [4Fe-4S] cluster. Positions 586-605 (GGAAGGGGGRSGSGFRPGRT) are disordered. Over residues 587–597 (GAAGGGGGRSG) the composition is skewed to gly residues.

Belongs to the UPF0313 family. [4Fe-4S] cluster serves as cofactor.

This chain is UPF0313 protein GSU2873, found in Geobacter sulfurreducens (strain ATCC 51573 / DSM 12127 / PCA).